A 332-amino-acid polypeptide reads, in one-letter code: DNA-directed RNA polymerase subunit alpha (332 aa).

The interval 1-227 (MKKFAETPFL…VMYSQMSVFN (227 aa)) is alpha N-terminal domain (alpha-NTD). Positions 248 to 332 (KELVIRIDDL…LRRKLEQLKA (85 aa)) are alpha C-terminal domain (alpha-CTD).

This sequence belongs to the RNA polymerase alpha chain family. Homodimer. The RNAP catalytic core consists of 2 alpha, 1 beta, 1 beta' and 1 omega subunit. When a sigma factor is associated with the core the holoenzyme is formed, which can initiate transcription.

It catalyses the reaction RNA(n) + a ribonucleoside 5'-triphosphate = RNA(n+1) + diphosphate. DNA-dependent RNA polymerase catalyzes the transcription of DNA into RNA using the four ribonucleoside triphosphates as substrates. The sequence is that of DNA-directed RNA polymerase subunit alpha from Aliarcobacter butzleri (strain RM4018) (Arcobacter butzleri).